The sequence spans 468 residues: Zinc finger CCCH domain-containing protein 32 (468 aa).

The interval 1-25 (MYARNPPLNGSQSAQAPDWTPADAD) is disordered. C3H1-type zinc fingers lie at residues 45–73 (RPGA…HPRD), 90–118 (RFGE…HPKN), 136–164 (REGD…HPQP), 289–317 (RPGE…HPRD), and 335–363 (RPGV…HPMG).

The protein localises to the nucleus. The sequence is that of Zinc finger CCCH domain-containing protein 32 from Arabidopsis thaliana (Mouse-ear cress).